The following is a 105-amino-acid chain: Heat shock protein HspQ (105 aa).

The disordered stretch occupies residues 76 to 105; sequence EMRDEHPEQPSMDELARTIRKQLQAPRLRN.

It belongs to the HspQ family.

Its subcellular location is the cytoplasm. Its function is as follows. Involved in the degradation of certain denaturated proteins, including DnaA, during heat shock stress. The protein is Heat shock protein HspQ of Salmonella agona (strain SL483).